The chain runs to 433 residues: Adenosylhomocysteinase A (433 aa).

The substrate site is built by threonine 57, aspartate 132, glutamate 157, lysine 187, and aspartate 191. The segment at 184–351 (SVTKSKFDNL…EGRLVNLGCA (168 aa)) is NAD binding.

Belongs to the adenosylhomocysteinase family. In terms of assembly, homotetramer. It depends on NAD(+) as a cofactor.

The protein resides in the cytoplasm. It catalyses the reaction S-adenosyl-L-homocysteine + H2O = L-homocysteine + adenosine. Its pathway is amino-acid biosynthesis; L-homocysteine biosynthesis; L-homocysteine from S-adenosyl-L-homocysteine: step 1/1. In terms of biological role, catalyzes the hydrolysis of S-adenosyl-L-homocysteine to form adenosine and homocysteine. Binds copper ions. The protein is Adenosylhomocysteinase A (ahcy-a) of Xenopus laevis (African clawed frog).